The sequence spans 350 residues: Protein memo-1 homolog (350 aa).

This sequence belongs to the MEMO1 family. Interacts with rho-1. Expressed in neuronal and non-neuronal cells in the head and tail, pharyngeal cells, spermatheca, distal tip cells, anchor cell and the intestine.

Functionally, plays a role in the oxidative stress response and the maintenance of longevity by regulating the interaction between GTPase rho-1 and oxidase bli-3. In turn, this serves to modulate bli-3 activity and the control of reactive oxygen species production. May control cell migration by relaying extracellular chemotactic signals to the microtubule cytoskeleton. The protein is Protein memo-1 homolog of Caenorhabditis elegans.